Consider the following 117-residue polypeptide: Large ribosomal subunit protein bL20 (117 aa).

It belongs to the bacterial ribosomal protein bL20 family.

Functionally, binds directly to 23S ribosomal RNA and is necessary for the in vitro assembly process of the 50S ribosomal subunit. It is not involved in the protein synthesizing functions of that subunit. This is Large ribosomal subunit protein bL20 from Aliivibrio salmonicida (strain LFI1238) (Vibrio salmonicida (strain LFI1238)).